The chain runs to 154 residues: Ecotin-like protein 2 (154 aa).

It belongs to the protease inhibitor I11 (ecotin) family.

This is Ecotin-like protein 2 from Leishmania braziliensis.